The following is a 116-amino-acid chain: NADH-ubiquinone oxidoreductase chain 3 (116 aa).

The next 3 helical transmembrane spans lie at 8–28, 56–76, and 88–108; these read VVAT…LPSL, FFLI…LLPL, and TLLW…YEWF.

This sequence belongs to the complex I subunit 3 family.

The protein resides in the mitochondrion membrane. The enzyme catalyses a ubiquinone + NADH + 5 H(+)(in) = a ubiquinol + NAD(+) + 4 H(+)(out). Its function is as follows. Core subunit of the mitochondrial membrane respiratory chain NADH dehydrogenase (Complex I) that is believed to belong to the minimal assembly required for catalysis. Complex I functions in the transfer of electrons from NADH to the respiratory chain. The immediate electron acceptor for the enzyme is believed to be ubiquinone. This Scyliorhinus canicula (Small-spotted catshark) protein is NADH-ubiquinone oxidoreductase chain 3 (MT-ND3).